A 156-amino-acid polypeptide reads, in one-letter code: ATP synthase subunit b 1 (156 aa).

Residues 7-27 form a helical membrane-spanning segment; the sequence is LFLQAIVFAILVWFTMKFVWP.

The protein belongs to the ATPase B chain family. As to quaternary structure, F-type ATPases have 2 components, F(1) - the catalytic core - and F(0) - the membrane proton channel. F(1) has five subunits: alpha(3), beta(3), gamma(1), delta(1), epsilon(1). F(0) has three main subunits: a(1), b(2) and c(10-14). The alpha and beta chains form an alternating ring which encloses part of the gamma chain. F(1) is attached to F(0) by a central stalk formed by the gamma and epsilon chains, while a peripheral stalk is formed by the delta and b chains.

It is found in the cell inner membrane. Functionally, f(1)F(0) ATP synthase produces ATP from ADP in the presence of a proton or sodium gradient. F-type ATPases consist of two structural domains, F(1) containing the extramembraneous catalytic core and F(0) containing the membrane proton channel, linked together by a central stalk and a peripheral stalk. During catalysis, ATP synthesis in the catalytic domain of F(1) is coupled via a rotary mechanism of the central stalk subunits to proton translocation. In terms of biological role, component of the F(0) channel, it forms part of the peripheral stalk, linking F(1) to F(0). The polypeptide is ATP synthase subunit b 1 (Albidiferax ferrireducens (strain ATCC BAA-621 / DSM 15236 / T118) (Rhodoferax ferrireducens)).